Here is a 1679-residue protein sequence, read N- to C-terminus: MAQQQQQQLQQQQQHHTSSINNNNNSILLLQQQQPQQQQQLDQLQQYNNNLYSQNYNMEEYERRKRREREKIERQQGIQIDDRETSLFGEPRRVTEGDAEITAALGEFFEARVYINNQTVGISRSAPGAGNPRLQPNMPPQGKSLGHSPSSASASAAAGPTSASATTALPGQQQQHYQQQQRPPTYVKQADNKPPYNGRGGYPGQPMKNDIPSSSGMAPPRGPPRSSSSNSNSSSATNNASSGGVPASTPLGPPLSTQMPNGREKSFLGPPAPALHNGTGGRFVPPAASKRPGVGQQPPPPEKDVNKIISDIANIFTVQPLTLIAATPHAPTRENYNLLAPNKQKYAMDIPSSPPSAEPSSLMTPLFAPIASPIAPLVTTPPQASQLPLGGATSGTILAGEALAPLHQLPPTPPKAASGVTSPGPGKPLKTEKNHSLEKQDSCLENDLELSESEDEQRKKEGRSAGNSSNSSESDSSESGSESSSKNDPQHHPNHQQHHHQLQQQQQQQQQQASMQQQQVLQQQQQHRPQPLTSNGAQNKKFRHEIIARGSNTITGLLSSSGFGSGGSVGPAGLNSSAAMGAGSGSGGTLSSGGSSSNKTPSPTESNKWNLSRFFHKPANQTNSENVSPGNVSMKVPGILPGGAQIIPESIDVTTAIVKNEKIHDDHMAMEDGEEEDDDEEQQLRYGGGLSVTPVAVKKEAIDAVSEMALGAIPKTQIKRESAEALLSARLSDSGTSASGSSSSSSSSSDSAVGGEVVPKLGLGEILQLPGVPAAITTVMRVQPTQSQKAPPSNSVTLTPILPLPTSPKQRQKKPRKKKAVTSAPILDSSDDDEPPPKHPGLDHTAVSVQTPPAADTVKKGRGRPRKQQQSGGSGNLSSASAGSSSQTKGPTLTAAKKPLAKTPLAMSRARKREHSSQSSSNGNTPTKKVATPQLVAAPLKPTSVTAGSSSSDEDSSSSAESSSKSSSSSSSSDDTETQNTNCRIVKLNKTGAVQKKALLGSGSSSPSSSGSEPEDQTTRSQVGSGQALAQQLPPYKQLPISQHSQHLSSSECSSSSGGCTAVCSSSSGEEDEGRREKERERKPKSDKNKISTLTRIFNPKEGGAKKQGQVVIVDLQEEQQQGKLDAAAQPPPPQAPPAAPAAIMAKPRMTPTQQQQLGAGLASPARTTTPHLTSLICKIDLSKLSRERIMRLKKLTPAQQNGHLTPKDQATNAVHVPNGYAGDTNPATKVKHEHPVKPEPELDAGYEAKFKPGNVKQEFQLKQERDRDRERERERERERDREREQPPGRRRKRSSSSSSSPYKEKKRKKEKADQLQIGKELLPVPVLLPSNNHERMPNHDRLSYDKLQLLHEDAAAVIGDVSAANGSPTKKMMVMSPLPPPPTVTVAPATCNEAVQTTPPSATTASATAPPVPATRLIYRSYFDRDVEHPSDDPRKNNQFLQEAISRKHAADLERDSFNQVTLYLEAVVYFLLTADAMERCSSEQATNTMYKDTLSLIKFISTKFRPYQQQSTTNIQHETHNKVAILSLRCQSLISLKLYKLRRKDCRAVINSLADFFRVGRGDIANGNTPSSISPSNSVGSQGSGSNTPPGRIVPPDIHNMLCKENEFLSYLNSAHELWDQADRLVRTGNHIDFIRELDHENGPLTLHSTMHEVFRYVQAGLKTLRDAVSHPTHQSQ.

Disordered stretches follow at residues 1–21, 55–78, 124–305, 406–539, 580–609, 733–755, 783–1172, and 1197–1319; these read MAQQ…SSIN, NYNM…QQGI, RSAP…EKDV, LHQL…GAQN, MGAG…SNKW, DSGT…AVGG, QPTQ…TTPH, and TPAQ…LQIG. Residues 69–78 are compositionally biased toward basic and acidic residues; it reads REKIERQQGI. Composition is skewed to low complexity over residues 144–181 and 212–244; these read SLGH…QQQQ and PSSS…SSGG. Thr-421 is subject to Phosphothreonine. A compositionally biased stretch (basic and acidic residues) spans 429–442; that stretch reads LKTEKNHSLEKQDS. Residues 444–455 are compositionally biased toward acidic residues; that stretch reads LENDLELSESED. 2 positions are modified to phosphoserine: Ser-451 and Ser-453. The span at 464-484 shows a compositional bias: low complexity; sequence SAGNSSNSSESDSSESGSESS. The span at 492-501 shows a compositional bias: basic residues; the sequence is HPNHQQHHHQ. Positions 502–532 are enriched in low complexity; sequence LQQQQQQQQQQASMQQQQVLQQQQQHRPQPL. A compositionally biased stretch (gly residues) spans 582 to 591; sequence AGSGSGGTLS. Polar residues predominate over residues 598-609; that stretch reads NKTPSPTESNKW. Positions 733 to 752 are enriched in low complexity; sequence DSGTSASGSSSSSSSSSDSA. Over residues 783 to 796 the composition is skewed to polar residues; the sequence is QPTQSQKAPPSNSV. Residues 810–820 show a composition bias toward basic residues; it reads QRQKKPRKKKA. Phosphoserine is present on residues Ser-829 and Ser-830. The segment at residues 859 to 871 is a DNA-binding region (a.T hook); the sequence is KKGRGRPRKQQQS. The span at 868-906 shows a compositional bias: low complexity; it reads QQQSGGSGNLSSASAGSSSQTKGPTLTAAKKPLAKTPLA. A phosphoserine mark is found at Ser-879 and Ser-881. Residues 917 to 927 show a composition bias toward polar residues; that stretch reads SQSSSNGNTPT. Low complexity-rich tracts occupy residues 957-973 and 1001-1012; these read SSSA…SSSS and GSGSSSPSSSGS. Residues 1019–1030 are compositionally biased toward polar residues; the sequence is TRSQVGSGQALA. Over residues 1042-1068 the composition is skewed to low complexity; the sequence is SQHSQHLSSSECSSSSGGCTAVCSSSS. Over residues 1073 to 1090 the composition is skewed to basic and acidic residues; the sequence is EGRREKERERKPKSDKNK. Pro residues predominate over residues 1130–1140; the sequence is QPPPPQAPPAA. Residues 1198-1213 show a composition bias toward polar residues; that stretch reads PAQQNGHLTPKDQATN. 2 stretches are compositionally biased toward basic and acidic residues: residues 1234–1251 and 1260–1288; these read EHPV…EAKF and FQLK…EQPP. At Ser-1368 the chain carries Phosphoserine. Phosphothreonine is present on Thr-1370. Over residues 1569 to 1589 the composition is skewed to low complexity; that stretch reads GNTPSSISPSNSVGSQGSGSN. Residues 1569 to 1594 are disordered; the sequence is GNTPSSISPSNSVGSQGSGSNTPPGR.

Belongs to the AF4 family.

Its subcellular location is the nucleus. Has a role in transcriptional regulation. Acts in parallel with the Ras/MAPK and the PI3K/PKB pathways in the control of cell identity and cellular growth. Essential for regulation of the cytoskeleton and cell growth but not for cell proliferation or growth rate. Required specifically for the microtubule-based basal transport of lipid droplets. Plays a partially redundant function downstream of Raf in cell fate specification in the developing eye. Pair-rule protein that regulates embryonic cellularization, gastrulation and segmentation. This chain is AF4/FMR2 family member lilli, found in Drosophila erecta (Fruit fly).